Here is a 309-residue protein sequence, read N- to C-terminus: MSIRIIPQDQLEKSDKRTAEVIPPLLFPRLKNLYNRRAARLRELAENNPLGDYLRFAALIAHAQEVVLYDHPLEMDLTARIKAAAEQGKPPLDIHVLPRDGHWQKLLQSLIAELKPEMSGPALAVIENLEKASAQELETMASALFSADFSAVSSDKAPFIWAALSLYWAQMASLIPGKARAEYGEARQFCPVCGSIPVSSMVHIGSSQGLRYLHCNLCETEWHVVRVKCSNCEQTRDLHYWSLESEQAAIKAESCGDCGTYLKILYQEKDPNVEPVADDLASLVLDARMEQEGFARSSINPFLFPGEGE.

Belongs to the FdhE family.

It localises to the cytoplasm. Functionally, necessary for formate dehydrogenase activity. The polypeptide is Protein FdhE homolog (Cronobacter sakazakii (strain ATCC BAA-894) (Enterobacter sakazakii)).